Here is a 55-residue protein sequence, read N- to C-terminus: Large ribosomal subunit protein bL32c (55 aa).

Positions 1-24 (MAVPKKRTSKSKKNARKANWKRKG) are disordered.

The protein belongs to the bacterial ribosomal protein bL32 family.

The protein localises to the plastid. The protein resides in the chloroplast. This chain is Large ribosomal subunit protein bL32c, found in Phaeodactylum tricornutum (strain CCAP 1055/1).